The following is a 619-amino-acid chain: E3 ubiquitin-protein ligase complex SLX5-SLX8 subunit SLX5 (619 aa).

The disordered stretch occupies residues 1-23 (MHSDTNGRTKSNNSPSDNNPNET). The segment covering 11–21 (SNNSPSDNNPN) has biased composition (low complexity). Phosphoserine occurs at positions 14 and 29. A disordered region spans residues 63–90 (VRSDSRSRNSQRTHITASSERPDFQANN). Polar residues predominate over residues 70-90 (RNSQRTHITASSERPDFQANN). The tract at residues 201 to 335 (SRRQLLRRSA…ALFTEFRNQL (135 aa)) is EUC1 interaction domain.

As to quaternary structure, component of the heterodimeric SUMO-targeted ubiquitin ligase (STUbL) complex composed of SLX5 and SLX8. Interacts with sirtuin SIR2. Interacts with KAR9. Interacts with EUC1.

It is found in the nucleus. It localises to the chromosome. The protein localises to the centromere. The protein resides in the kinetochore. It carries out the reaction S-ubiquitinyl-[E2 ubiquitin-conjugating enzyme]-L-cysteine + [acceptor protein]-L-lysine = [E2 ubiquitin-conjugating enzyme]-L-cysteine + N(6)-ubiquitinyl-[acceptor protein]-L-lysine.. It functions in the pathway protein modification; protein ubiquitination. Its function is as follows. Component of the SUMO-targeted ubiquitin ligase (STUbL) complex SLX5/SLX8 that mediates ubiquitination and subsequent desumoylation of sumoylated proteins and proteins containing SUMO-like domains for their degradation. The STUbL complex SLX5/SLX8 stimulates ubiquitin conjugating enzymes, including UBC1, UBC4, UBC5 and UBC13-MMS2, and mediates the proteolytic down-regulation of sumoylated proteins. The STUbL complex SLX5/SLX8 is involved in ubiquitin-mediated degradation of histone variant CSE4, preventing mislocalization to euchromatin. The complex plays an essential role in maintenance of chromosome stability and links SUMO-dependent ubiquitination to a centromere-specific function during mitosis. The complex is involved in proteolysis of spindle positioning protein KAR9 and ensures correct spindle function by regulating levels of microtubule-associated proteins. During replication, the complex helps prevent DNA lesions via recombination and has a role in localizing the DNA damage protein DCD2. The complex especially ubiquitinates the nuclease YEN1 and prevents persistent accumulation of a fraction of YEN1 associated with sites of activity in late G2/M and helps maintain the balance between pro- and anti-crossover pathways during homologous recombination. It is also involved in ubiquitin-mediated degradation of DNA repair proteins RAD52 and RAD57. Along with SIR2, promotes silencing of genes at telomeric or ribosomal DNA (rDNA) loci. Finally, the complex is recruited to distinct genomic hotspots of non-H2B protein ubiquitination (ub-hotspots) by the sumoylated transcription factor-like protein EUC1 where it ubiquitinates EUC1 and presumably other targets. The protein is E3 ubiquitin-protein ligase complex SLX5-SLX8 subunit SLX5 (SLX5) of Saccharomyces cerevisiae (strain ATCC 204508 / S288c) (Baker's yeast).